The following is a 790-amino-acid chain: Protein SEY1 (790 aa).

Residues 1 to 692 are Cytoplasmic-facing; it reads MELSEGELSH…KRSIVQHITQ (692 aa). Residues 55 to 284 enclose the GB1/RHD3-type G domain; it reads GNNYHIISVF…VSNELFKPEY (230 aa). 65–72 is a binding site for GTP; that stretch reads GSQSTGKS. The helical transmembrane segment at 693-713 threads the bilayer; sequence IPYYIYLIILVLGWNEFMAII. The Lumenal segment spans residues 714–716; it reads RNP. A helical transmembrane segment spans residues 717–737; it reads LFFSLSIVLGATVYVLYYLGL. Residues 738-790 lie on the Cytoplasmic side of the membrane; it reads LRPALVVAQRTMDEVIVMAKTKLREVLIDDHEVTGRQLNKMAGSKENIELDDM.

Belongs to the TRAFAC class dynamin-like GTPase superfamily. GB1/RHD3 GTPase family. RHD3 subfamily.

The protein localises to the endoplasmic reticulum membrane. Functionally, cooperates with the reticulon proteins and tubule-shaping DP1 family proteins to generate and maintain the structure of the tubular endoplasmic reticulum network. Has GTPase activity, which is required for its function in ER organization. The polypeptide is Protein SEY1 (Candida albicans (strain WO-1) (Yeast)).